The primary structure comprises 255 residues: Small ribosomal subunit protein eS1 (255 aa).

The span at 1–18 shows a compositional bias: basic residues; that stretch reads MAVGKNKRLSKGKKGLKK. The segment at 1–22 is disordered; it reads MAVGKNKRLSKGKKGLKKRAQD. Ala-2 carries the N-acetylalanine; partial modification.

It belongs to the eukaryotic ribosomal protein eS1 family. In terms of assembly, component of the small ribosomal subunit. Mature ribosomes consist of a small (40S) and a large (60S) subunit. The 40S subunit contains about 33 different proteins and 1 molecule of RNA (18S). The 60S subunit contains about 49 different proteins and 3 molecules of RNA (25S, 5.8S and 5S).

It is found in the cytoplasm. The protein is Small ribosomal subunit protein eS1 of Uncinocarpus reesii (strain UAMH 1704).